The primary structure comprises 403 residues: Metacaspase-7 (403 aa).

Active-site residues include His86 and Cys139. S-nitrosocysteine is present on Cys139.

This sequence belongs to the peptidase C14B family. Proteolytically processed; by an autocatalytic mechanism. Expressed in roots, flowers and siliques.

The sequence is that of Metacaspase-7 (AMC7) from Arabidopsis thaliana (Mouse-ear cress).